The following is a 180-amino-acid chain: Small ribosomal subunit protein uS4 (180 aa).

An S4 RNA-binding domain is found at 103–174; that stretch reads RRLQTLVFKK…HPERMVIEEV (72 aa).

Belongs to the universal ribosomal protein uS4 family. As to quaternary structure, part of the 30S ribosomal subunit. Contacts protein S5. The interaction surface between S4 and S5 is involved in control of translational fidelity.

One of the primary rRNA binding proteins, it binds directly to 16S rRNA where it nucleates assembly of the body of the 30S subunit. Its function is as follows. With S5 and S12 plays an important role in translational accuracy. The chain is Small ribosomal subunit protein uS4 from Thermococcus sibiricus (strain DSM 12597 / MM 739).